The sequence spans 288 residues: Protease HtpX (288 aa).

The next 2 helical transmembrane spans lie at 4-24 (VMLF…VLNI) and 36-56 (LSGL…ISLM). His143 serves as a coordination point for Zn(2+). Glu144 is an active-site residue. A Zn(2+)-binding site is contributed by His147. The next 2 membrane-spanning stretches (helical) occupy residues 151–171 (GDMV…IFLS) and 193–213 (MVYF…ASFI). Glu222 serves as a coordination point for Zn(2+).

It belongs to the peptidase M48B family. Requires Zn(2+) as cofactor.

The protein resides in the cell inner membrane. The sequence is that of Protease HtpX from Vibrio vulnificus (strain YJ016).